A 212-amino-acid chain; its full sequence is LexA repressor (212 aa).

The segment at residues 26 to 46 (VREIGEAVGLSSTSTVHGHID) is a DNA-binding region (H-T-H motif). Residues Ser-128 and Lys-171 each act as for autocatalytic cleavage activity in the active site.

Belongs to the peptidase S24 family. In terms of assembly, homodimer.

It catalyses the reaction Hydrolysis of Ala-|-Gly bond in repressor LexA.. Represses a number of genes involved in the response to DNA damage (SOS response), including recA and lexA. In the presence of single-stranded DNA, RecA interacts with LexA causing an autocatalytic cleavage which disrupts the DNA-binding part of LexA, leading to derepression of the SOS regulon and eventually DNA repair. This Oenococcus oeni (strain ATCC BAA-331 / PSU-1) protein is LexA repressor.